We begin with the raw amino-acid sequence, 577 residues long: Arginine--tRNA ligase (577 aa).

Residues 122–132 carry the 'HIGH' region motif; sequence PNVAKEMHVGH.

This sequence belongs to the class-I aminoacyl-tRNA synthetase family. In terms of assembly, monomer.

It localises to the cytoplasm. The catalysed reaction is tRNA(Arg) + L-arginine + ATP = L-arginyl-tRNA(Arg) + AMP + diphosphate. This Salmonella newport (strain SL254) protein is Arginine--tRNA ligase.